Reading from the N-terminus, the 83-residue chain is Neurotoxin LmNaTx3 (83 aa).

The first 21 residues, 1–21, serve as a signal peptide directing secretion; the sequence is MQLKIQLLMLVLMIVLTDVYS. The LCN-type CS-alpha/beta domain maps to 22-83; the sequence is KDGFIVSKKN…NIAMKNKNYC (62 aa). Disulfide bonds link C32-C83, C36-C59, C45-C64, and C49-C66.

The protein belongs to the long (4 C-C) scorpion toxin superfamily. Sodium channel inhibitor family. Alpha subfamily. In terms of tissue distribution, expressed by the venom gland.

The protein localises to the secreted. Its function is as follows. Binds voltage-independently at site-3 of voltage-gated sodium channels (Nav) and inhibits the inactivation of the activated channels, thereby blocking neuronal transmission. The sequence is that of Neurotoxin LmNaTx3 from Lychas mucronatus (Chinese swimming scorpion).